The sequence spans 60 residues: Large ribosomal subunit protein bL32 (60 aa).

A compositionally biased stretch (basic residues) spans 1–19; the sequence is MAVPKRRTSKRRKRARNTH. Residues 1 to 20 are disordered; that stretch reads MAVPKRRTSKRRKRARNTHK.

Belongs to the bacterial ribosomal protein bL32 family.

The sequence is that of Large ribosomal subunit protein bL32 from Gemmatimonas aurantiaca (strain DSM 14586 / JCM 11422 / NBRC 100505 / T-27).